A 570-amino-acid chain; its full sequence is MSEKHPGPLVVEGKLTDAERMKLESNYLRGTIAEDLNDGLTGGFKGDNFLLIRFHGMYQQDDRDIRAERAEQKLEPRHAMLLRCRLPGGVITTKQWQAIDKFAGENTIYGSIRLTNRQTFQFHGILKKNVKPVHQMLHSVGLDALATANDMNRNVLCTSNPYESQLHAEAYEWAKKISEHLLPRTRAYAEIWLDQEKVATTDEEPILGQTYLPRKFKTTVVIPPQNDIDLHANDMNFVAIAENGKLVGFNLLVGGGLSIEHGNKKTYARTASEFGYLPLEHTLAVAEAVVTTQRDWGNRTDRKNAKTKYTLERVGVETFKAEVERRAGIKFEPIRPYEFTGRGDRIGWVKGIDDNWHLTLFIENGRILDYPGRPLKTGLLEIAKIHKGDFRITANQNLIIAGVPESEKAKIEKIAKESGLMNAVTPQRENSMACVSFPTCPLAMAEAERFLPSFIDNIDNLMAKHGVSDEHIVMRVTGCPNGCGRAMLAEVGLVGKAPGRYNLHLGGNRMGTRIPRMYKENITEPEILASLDELIGRWAKEREAGEGFGDFTVRAGIIRPVLDPARDLWD.

Residues Cys434, Cys440, Cys479, and Cys483 each coordinate [4Fe-4S] cluster. A siroheme-binding site is contributed by Cys483.

This sequence belongs to the nitrite and sulfite reductase 4Fe-4S domain family. As to quaternary structure, alpha(8)-beta(8). The alpha component is a flavoprotein, the beta component is a hemoprotein. Siroheme is required as a cofactor. Requires [4Fe-4S] cluster as cofactor.

It catalyses the reaction hydrogen sulfide + 3 NADP(+) + 3 H2O = sulfite + 3 NADPH + 4 H(+). The protein operates within sulfur metabolism; hydrogen sulfide biosynthesis; hydrogen sulfide from sulfite (NADPH route): step 1/1. Functionally, component of the sulfite reductase complex that catalyzes the 6-electron reduction of sulfite to sulfide. This is one of several activities required for the biosynthesis of L-cysteine from sulfate. This chain is Sulfite reductase [NADPH] hemoprotein beta-component, found in Escherichia coli O6:H1 (strain CFT073 / ATCC 700928 / UPEC).